Consider the following 87-residue polypeptide: Homeotic protein ultrabithorax (87 aa).

Residues 22–27 (FYPWMA) carry the Antp-type hexapeptide motif.

This sequence belongs to the Antp homeobox family. In terms of tissue distribution, in the embryo, expression is seen in the epidermis, somatic and visceral mesoderm, and the peripheral and central nervous system.

Its subcellular location is the nucleus. Functionally, sequence-specific transcription factor which is part of a developmental regulatory system that provides cells with specific positional identities on the anterior-posterior axis. Binds the consensus region 5'-TTAAT[GT][GA]-3'. This homeotic protein controls development of the cells in the posterior thoracic and first abdominal segments. It activates the synthesis of the decapentaplegic (DPP) growth factor. The chain is Homeotic protein ultrabithorax (Ubx) from Drosophila virilis (Fruit fly).